Consider the following 569-residue polypeptide: Urease subunit beta (569 aa).

The 439-residue stretch at 131–569 (GGIDTHIHFI…LSLAQLYNLF (439 aa)) folds into the Urease domain. Positions 136, 138, and 219 each coordinate Ni(2+). Lys-219 is modified (N6-carboxylysine). A substrate-binding site is contributed by His-221. Residues His-248 and His-274 each coordinate Ni(2+). Residue His-322 is the Proton donor of the active site. Residue Asp-362 coordinates Ni(2+).

The protein belongs to the metallo-dependent hydrolases superfamily. Urease alpha subunit family. Heterohexamer of 3 UreA (alpha) and 3 UreB (beta) subunits. Ni cation serves as cofactor. Post-translationally, carboxylation allows a single lysine to coordinate two nickel ions.

It is found in the cytoplasm. It carries out the reaction urea + 2 H2O + H(+) = hydrogencarbonate + 2 NH4(+). It participates in nitrogen metabolism; urea degradation; CO(2) and NH(3) from urea (urease route): step 1/1. This Helicobacter felis (strain ATCC 49179 / CCUG 28539 / NCTC 12436 / CS1) protein is Urease subunit beta.